A 1081-amino-acid chain; its full sequence is Psi-producing oxygenase A (1081 aa).

The linoleate 8R-lipoxygenase stretch occupies residues 105-446; the sequence is TKSFLNMLWN…DGAFNDDDLV (342 aa). A heme b-binding site is contributed by His-202. Tyr-374 is an active-site residue. His-377 provides a ligand contact to heme b. The interval 654-1081 is 9,12-octadecadienoate 8-hydroperoxide 8R-isomerase; the sequence is IFISSHAACM…GELPQLKEDF (428 aa).

The protein belongs to the peroxidase family. In terms of assembly, homotetramer. It depends on heme b as a cofactor.

The enzyme catalyses (9Z,12Z)-octadecadienoate + O2 = (8R,9Z,12Z)-8-hydroperoxyoctadeca-9,12-dienoate. It catalyses the reaction (8R,9Z,12Z)-8-hydroperoxyoctadeca-9,12-dienoate = (5S,8R,9Z,12Z)-5,8-dihydroxyoctadeca-9,12-dienoate. Its function is as follows. Bifunctional heme-containing enzyme that oxidizes linoleic acid to (8R,9Z,12Z)-8-hydroperoxyoctadeca-9,12-dienoate (within the N-terminal heme peroxidase domain), which is subsequently isomerized to (5S,8R,9Z,12Z)-5,8-dihydroxyoctadeca-9,12-dienoate (within the C-terminal P450 heme thiolate domain). Oxidized unsaturated fatty acids, so-called oxylipins, derived from endogenous fatty acids, influence the development of the asexual conidiophores and sexual cleistothecia and regulate the secondary metabolism. These substances were collectively named psi factors and are primarily a mixture of hydroxylated oleic, linoleic and alpha-linolenic acids. They are termed psi-beta, psi-alpha, and psi-gamma, respectively. The chain is Psi-producing oxygenase A (ppoA) from Emericella nidulans (Aspergillus nidulans).